A 60-amino-acid polypeptide reads, in one-letter code: MDVRRAQEIASSPVMANVTYNGQRIYIEHVDQQKGVATIHPLDNPNQKQSVPVASLEEHS.

The interval 39 to 60 is disordered; the sequence is IHPLDNPNQKQSVPVASLEEHS.

This sequence belongs to the SspH family.

The protein localises to the spore core. This Geobacillus kaustophilus (strain HTA426) protein is Small, acid-soluble spore protein H 1.